The chain runs to 1578 residues: FH1/FH2 domain-containing protein 3 (1578 aa).

The GBD/FH3 domain maps to 18 to 405 (NSTNFPEPSR…DLCEKDEEEE (388 aa)). 7 disordered regions span residues 324–518 (HEDG…DKLP), 535–824 (SPLL…GVNG), 915–942 (VGRG…KTES), 979–1013 (LGHR…VPPP), 1418–1462 (QQKQ…YAED), 1490–1514 (RTRS…PSVT), and 1528–1565 (SATQ…PEEA). S345 and S376 each carry phosphoserine. The span at 368–383 (IQNIKSPLSAPTSPCS) shows a compositional bias: polar residues. Acidic residues predominate over residues 399-425 (EKDEEEEEEEEQPITEPNSEEEREDDA). Phosphothreonine is present on T413. The span at 434–446 (ASSASGQSSPGKD) shows a compositional bias: low complexity. Residues 453–473 (ALHTTSSPTSQGRWLSASTAA) are compositionally biased toward polar residues. Residues 553-583 (SNFSSNSFQSSRPSPGPSGSPSYASSFSSPQ) are compositionally biased toward low complexity. Polar residues predominate over residues 584-598 (DTRSSPSGLLTSSFR). The stretch at 597 to 645 (FRQHQESLAAERERRRQEREERLQRIEREERNKFNREYLDKREEQRQAR) forms a coiled coil. Residues 599 to 651 (QHQESLAAERERRRQEREERLQRIEREERNKFNREYLDKREEQRQARGERYKY) show a composition bias toward basic and acidic residues. Composition is skewed to low complexity over residues 675–684 (DLSLDLSLPA) and 692–701 (SSQSPSADSQ). Residues 751–761 (SQEEPVLELEP) show a composition bias toward acidic residues. A compositionally biased stretch (basic and acidic residues) spans 762–782 (EERASLSEKERQNEEVNERDN). Residues 784-793 (SASSISSSSS) show a composition bias toward low complexity. Basic and acidic residues predominate over residues 795–809 (LEREEKEDKLSEDRA). Phosphoserine is present on S921. Residue T933 is modified to Phosphothreonine. The segment covering 985–1013 (PGPPPPPPPTFLGLPPPPPPPLLDSVPPP) has biased composition (pro residues). In terms of domain architecture, FH1 spans 985–1016 (PGPPPPPPPTFLGLPPPPPPPLLDSVPPPPVP). In terms of domain architecture, FH2 spans 1039–1435 (GQPAFTKKKK…HRERNKTRGK (397 aa)). Positions 1420-1434 (KQKRANHRERNKTRG) are enriched in basic residues. A compositionally biased stretch (low complexity) spans 1444-1456 (SGSSPAAPSQPQG). Positions 1515-1547 (DDAADEIMDRIVKSATQVPSQRVVPRERKRSRA) constitute a DAD domain. The segment covering 1541–1556 (ERKRSRANRKSLRRTL) has biased composition (basic residues).

The protein belongs to the formin homology family. In terms of assembly, interacts with nestin/NES-based interfilament (IF). Interacts with SQSTM1. As to expression, expressed in the heart, including left ventricle, kidney, brain and skeletal muscle, including soleus and tibialis anterior (at protein level).

The protein localises to the cytoplasm. Its subcellular location is the cytoskeleton. It is found in the myofibril. The protein resides in the sarcomere. It localises to the z line. In terms of biological role, may play a role in actin filament polymerization in cardiomyocytes. Actin-organizing protein that may cause stress fiber formation together with cell elongation. This chain is FH1/FH2 domain-containing protein 3 (Fhod3), found in Mus musculus (Mouse).